The chain runs to 358 residues: Putative hydrogenase expression/formation protein MJ0993 (358 aa).

Fe cation-binding residues include C33, C61, and C64.

It belongs to the HypD family.

This Methanocaldococcus jannaschii (strain ATCC 43067 / DSM 2661 / JAL-1 / JCM 10045 / NBRC 100440) (Methanococcus jannaschii) protein is Putative hydrogenase expression/formation protein MJ0993.